The sequence spans 741 residues: Phosphoribosylformylglycinamidine synthase subunit PurL (741 aa).

The active site involves H54. The ATP site is built by Y57 and K98. A Mg(2+)-binding site is contributed by E100. Substrate-binding positions include 101-104 and R123; that span reads SHNH. The active-site Proton acceptor is the H102. Residue D124 coordinates Mg(2+). Q251 provides a ligand contact to substrate. D279 provides a ligand contact to Mg(2+). 323–325 serves as a coordination point for substrate; the sequence is ESQ. Positions 510 and 547 each coordinate ATP. N548 lines the Mg(2+) pocket. A substrate-binding site is contributed by S550.

Belongs to the FGAMS family. As to quaternary structure, monomer. Part of the FGAM synthase complex composed of 1 PurL, 1 PurQ and 2 PurS subunits.

The protein resides in the cytoplasm. It catalyses the reaction N(2)-formyl-N(1)-(5-phospho-beta-D-ribosyl)glycinamide + L-glutamine + ATP + H2O = 2-formamido-N(1)-(5-O-phospho-beta-D-ribosyl)acetamidine + L-glutamate + ADP + phosphate + H(+). Its pathway is purine metabolism; IMP biosynthesis via de novo pathway; 5-amino-1-(5-phospho-D-ribosyl)imidazole from N(2)-formyl-N(1)-(5-phospho-D-ribosyl)glycinamide: step 1/2. In terms of biological role, part of the phosphoribosylformylglycinamidine synthase complex involved in the purines biosynthetic pathway. Catalyzes the ATP-dependent conversion of formylglycinamide ribonucleotide (FGAR) and glutamine to yield formylglycinamidine ribonucleotide (FGAM) and glutamate. The FGAM synthase complex is composed of three subunits. PurQ produces an ammonia molecule by converting glutamine to glutamate. PurL transfers the ammonia molecule to FGAR to form FGAM in an ATP-dependent manner. PurS interacts with PurQ and PurL and is thought to assist in the transfer of the ammonia molecule from PurQ to PurL. This is Phosphoribosylformylglycinamidine synthase subunit PurL from Picrophilus torridus (strain ATCC 700027 / DSM 9790 / JCM 10055 / NBRC 100828 / KAW 2/3).